Here is a 146-residue protein sequence, read N- to C-terminus: Large ribosomal subunit protein uL15 (146 aa).

Residues 1 to 55 (MGLRLNELSPGVGAKKTAQRRGRGIGSGLGKTGGRGVKGQKSRSGSSIRSGFEGG) are disordered. Gly residues predominate over residues 24–37 (GIGSGLGKTGGRGV).

Belongs to the universal ribosomal protein uL15 family. In terms of assembly, part of the 50S ribosomal subunit.

Functionally, binds to the 23S rRNA. In Psychrobacter cryohalolentis (strain ATCC BAA-1226 / DSM 17306 / VKM B-2378 / K5), this protein is Large ribosomal subunit protein uL15.